Here is a 433-residue protein sequence, read N- to C-terminus: E3 ubiquitin-protein ligase RNF26 (433 aa).

Transmembrane regions (helical) follow at residues 24 to 44 (LNFLLVSSLLASLAWLLAFVY), 60 to 80 (GVLLSLLALIEAVVRFTCGGL), 147 to 169 (VINSLVNICLIGTQNLFSLVLAL), 183 to 203 (VVAAFLAHISSSAVAMAILLW), and 220 to 240 (LASFVLVNLTGLVLLACVLAV). Residues 380–422 (CVICQDQSKTVLLLPCRHLCLCQACTEILMRHPVYHRNCPLCR) form an RING-type zinc finger.

In terms of assembly, interacts with INCA1. Interacts with TMEM43, ENDOD1, TMEM33 and TMED1 to form a complex capable of modulating innate immune signaling through the cGAS-STING pathway. Interacts with UBE2J1; this interaction is important for SQSTM1 ubiquitination. Ubiquitous. Up-regulated in several cancer cell lines.

It localises to the endoplasmic reticulum membrane. The catalysed reaction is S-ubiquitinyl-[E2 ubiquitin-conjugating enzyme]-L-cysteine + [acceptor protein]-L-lysine = [E2 ubiquitin-conjugating enzyme]-L-cysteine + N(6)-ubiquitinyl-[acceptor protein]-L-lysine.. The protein operates within protein modification; protein ubiquitination. Its function is as follows. E3 ubiquitin-protein ligase that plays a key role in endosome organization by retaining vesicles in the perinuclear cloud. Acts as a platform for perinuclear positioning of the endosomal system by mediating ubiquitination of SQSTM1 through interaction with the ubiquitin conjugating enzyme UBE2J1. Ubiquitinated SQSTM1 attracts specific vesicle-associated adapters, forming a molecular bridge that restrains cognate vesicles in the perinuclear region and organizes the endosomal pathway for efficient cargo transport. Also acts as a regulator of type I interferon production in response to viral infection by mediating the formation of 'Lys-11'-linked polyubiquitin chains on TMEM173/STING, leading to stabilize TMEM173/STING. Also required to limit type I interferon response by promoting autophagic degradation of IRF3. This chain is E3 ubiquitin-protein ligase RNF26, found in Homo sapiens (Human).